A 345-amino-acid polypeptide reads, in one-letter code: MKTENPLSFDYKSAGVDIAAGNALVERIKPAARKTVRPGVLAGLGGFGSLFELPVDRYRKPVLVAGTDGVGTKLRLAIESGRHGGVGIDLVAMCANDIVVQGAEPLFFLDYYATGKLDVDVAASVIAGIAQGCERAGCALVGGETAEMPGMYAGGDYDLAGFCVGVVEKEAIIDGSRVRPGDRLIGLASSGPHSNGYSLIRKIVGHSGLGLDAPVAGRALGDWLLEPTRIYVKPLLELLKSVEVHALAHITGGGITENLPRVLPVGTAARIDTAAWTMPEIFRWLQRHGGVETPEMFRTFNCGVGMIVCVAPEDEARTLEALSSLGERAFAVGEIIAGEPAVHYV.

It belongs to the AIR synthase family.

It is found in the cytoplasm. It catalyses the reaction 2-formamido-N(1)-(5-O-phospho-beta-D-ribosyl)acetamidine + ATP = 5-amino-1-(5-phospho-beta-D-ribosyl)imidazole + ADP + phosphate + H(+). It participates in purine metabolism; IMP biosynthesis via de novo pathway; 5-amino-1-(5-phospho-D-ribosyl)imidazole from N(2)-formyl-N(1)-(5-phospho-D-ribosyl)glycinamide: step 2/2. In Methylococcus capsulatus (strain ATCC 33009 / NCIMB 11132 / Bath), this protein is Phosphoribosylformylglycinamidine cyclo-ligase.